Consider the following 505-residue polypeptide: ATP synthase subunit alpha (505 aa).

G170–T177 is a binding site for ATP.

Belongs to the ATPase alpha/beta chains family. F-type ATPases have 2 components, CF(1) - the catalytic core - and CF(0) - the membrane proton channel. CF(1) has five subunits: alpha(3), beta(3), gamma(1), delta(1), epsilon(1). CF(0) has four main subunits: a(1), b(1), b'(1) and c(9-12).

The protein resides in the cellular thylakoid membrane. The catalysed reaction is ATP + H2O + 4 H(+)(in) = ADP + phosphate + 5 H(+)(out). Produces ATP from ADP in the presence of a proton gradient across the membrane. The alpha chain is a regulatory subunit. This is ATP synthase subunit alpha from Synechococcus sp. (strain ATCC 27144 / PCC 6301 / SAUG 1402/1) (Anacystis nidulans).